A 188-amino-acid chain; its full sequence is Peptidyl-tRNA hydrolase (188 aa).

Residue Tyr14 participates in tRNA binding. His19 functions as the Proton acceptor in the catalytic mechanism. TRNA-binding residues include Tyr64, Asn66, and Asn112.

This sequence belongs to the PTH family. In terms of assembly, monomer.

The protein resides in the cytoplasm. It catalyses the reaction an N-acyl-L-alpha-aminoacyl-tRNA + H2O = an N-acyl-L-amino acid + a tRNA + H(+). Hydrolyzes ribosome-free peptidyl-tRNAs (with 1 or more amino acids incorporated), which drop off the ribosome during protein synthesis, or as a result of ribosome stalling. In terms of biological role, catalyzes the release of premature peptidyl moieties from peptidyl-tRNA molecules trapped in stalled 50S ribosomal subunits, and thus maintains levels of free tRNAs and 50S ribosomes. The chain is Peptidyl-tRNA hydrolase from Clostridium perfringens (strain ATCC 13124 / DSM 756 / JCM 1290 / NCIMB 6125 / NCTC 8237 / Type A).